The primary structure comprises 536 residues: CTP synthase (536 aa).

The segment at 1–267 is amidoligase domain; it reads MSKFVFVTGG…CKETLKYLEL (267 aa). Ser13 is a CTP binding site. Ser13 contributes to the UTP binding site. ATP-binding positions include 14–19 and Asp71; that span reads SIGKGI. Mg(2+)-binding residues include Asp71 and Glu141. CTP-binding positions include 148-150, 188-193, and Lys224; these read DIE and KTKPTQ. Residues 188 to 193 and Lys224 contribute to the UTP site; that span reads KTKPTQ. Residues 292 to 534 enclose the Glutamine amidotransferase type-1 domain; that stretch reads KVALVGKYIE…IKASQEKLTQ (243 aa). Gly354 contacts L-glutamine. The active-site Nucleophile; for glutamine hydrolysis is the Cys381. Residues 382-385, Glu405, and Arg462 contribute to the L-glutamine site; that span reads LGMQ. Residues His507 and Glu509 contribute to the active site.

Belongs to the CTP synthase family. As to quaternary structure, homotetramer.

It catalyses the reaction UTP + L-glutamine + ATP + H2O = CTP + L-glutamate + ADP + phosphate + 2 H(+). It carries out the reaction L-glutamine + H2O = L-glutamate + NH4(+). The catalysed reaction is UTP + NH4(+) + ATP = CTP + ADP + phosphate + 2 H(+). It participates in pyrimidine metabolism; CTP biosynthesis via de novo pathway; CTP from UDP: step 2/2. Its activity is regulated as follows. Allosterically activated by GTP, when glutamine is the substrate; GTP has no effect on the reaction when ammonia is the substrate. The allosteric effector GTP functions by stabilizing the protein conformation that binds the tetrahedral intermediate(s) formed during glutamine hydrolysis. Inhibited by the product CTP, via allosteric rather than competitive inhibition. Catalyzes the ATP-dependent amination of UTP to CTP with either L-glutamine or ammonia as the source of nitrogen. Regulates intracellular CTP levels through interactions with the four ribonucleotide triphosphates. The chain is CTP synthase from Prochlorococcus marinus (strain MIT 9215).